The sequence spans 514 residues: 2,3-bisphosphoglycerate-independent phosphoglycerate mutase (514 aa).

The Mn(2+) site is built by D14 and S64. S64 (phosphoserine intermediate) is an active-site residue. Residues H125, 155 to 156 (RD), R187, R193, 263 to 266 (RADR), and K336 each bind substrate. The Mn(2+) site is built by D403, H407, D444, H445, and H463.

The protein belongs to the BPG-independent phosphoglycerate mutase family. In terms of assembly, monomer. Mn(2+) serves as cofactor.

The enzyme catalyses (2R)-2-phosphoglycerate = (2R)-3-phosphoglycerate. It functions in the pathway carbohydrate degradation; glycolysis; pyruvate from D-glyceraldehyde 3-phosphate: step 3/5. In terms of biological role, catalyzes the interconversion of 2-phosphoglycerate and 3-phosphoglycerate. The protein is 2,3-bisphosphoglycerate-independent phosphoglycerate mutase of Shewanella pealeana (strain ATCC 700345 / ANG-SQ1).